The following is a 241-amino-acid chain: Uridylate kinase (241 aa).

Residue 9–10 (GS) participates in ATP binding. A UMP-binding site is contributed by Gly44. The ATP site is built by Gly45 and Arg49. Residues Asp66 and 114–120 (IMPGQTT) each bind UMP. Positions 140, 146, and 149 each coordinate ATP.

It belongs to the UMP kinase family. As to quaternary structure, homohexamer.

Its subcellular location is the cytoplasm. The catalysed reaction is UMP + ATP = UDP + ADP. It functions in the pathway pyrimidine metabolism; CTP biosynthesis via de novo pathway; UDP from UMP (UMPK route): step 1/1. Inhibited by UTP. In terms of biological role, catalyzes the reversible phosphorylation of UMP to UDP. The protein is Uridylate kinase of Haloquadratum walsbyi (strain DSM 16790 / HBSQ001).